Here is a 193-residue protein sequence, read N- to C-terminus: MKIYKADFITSGVNPEHYPEPLLPEVALAGRSNVGKSSFINKLVQRKALARTSSKPGKTQTLNFFNINDEVMFVDVPGYGYAKVSKTEREAWGKMMEKYFTTREILKGVVLLVDIRHEPSADDVIMYDFLKYYDLSVIVVATKLDKIKRGQRDKQIAAIKRKLQFDGQDTFIPFSSETGEGVDAAWEAIYRHL.

The 172-residue stretch at 22 to 193 (LLPEVALAGR…AAWEAIYRHL (172 aa)) folds into the EngB-type G domain. Residues 30–37 (GRSNVGKS), 57–61 (GKTQT), 75–78 (DVPG), 142–145 (TKLD), and 174–176 (FSS) each bind GTP. Mg(2+) is bound by residues serine 37 and threonine 59.

This sequence belongs to the TRAFAC class TrmE-Era-EngA-EngB-Septin-like GTPase superfamily. EngB GTPase family. It depends on Mg(2+) as a cofactor.

In terms of biological role, necessary for normal cell division and for the maintenance of normal septation. The sequence is that of Probable GTP-binding protein EngB from Exiguobacterium sibiricum (strain DSM 17290 / CCUG 55495 / CIP 109462 / JCM 13490 / 255-15).